A 426-amino-acid polypeptide reads, in one-letter code: Enolase (426 aa).

Residue Gln163 participates in (2R)-2-phosphoglycerate binding. Glu205 functions as the Proton donor in the catalytic mechanism. Mg(2+) is bound by residues Asp242, Glu286, and Asp313. 4 residues coordinate (2R)-2-phosphoglycerate: Lys338, Arg367, Ser368, and Lys389. Lys338 functions as the Proton acceptor in the catalytic mechanism.

It belongs to the enolase family. The cofactor is Mg(2+).

It localises to the cytoplasm. Its subcellular location is the secreted. The protein localises to the cell surface. The enzyme catalyses (2R)-2-phosphoglycerate = phosphoenolpyruvate + H2O. It participates in carbohydrate degradation; glycolysis; pyruvate from D-glyceraldehyde 3-phosphate: step 4/5. In terms of biological role, catalyzes the reversible conversion of 2-phosphoglycerate (2-PG) into phosphoenolpyruvate (PEP). It is essential for the degradation of carbohydrates via glycolysis. This is Enolase from Syntrophobacter fumaroxidans (strain DSM 10017 / MPOB).